Consider the following 133-residue polypeptide: UPF0225 protein BPP1723 (133 aa).

The protein belongs to the UPF0225 family.

This chain is UPF0225 protein BPP1723, found in Bordetella parapertussis (strain 12822 / ATCC BAA-587 / NCTC 13253).